We begin with the raw amino-acid sequence, 106 residues long: Small ribosomal subunit protein bS16 (106 aa).

The disordered stretch occupies residues Lys84–Lys106.

The polypeptide is Small ribosomal subunit protein bS16 (Rhodopseudomonas palustris (strain ATCC BAA-98 / CGA009)).